The sequence spans 357 residues: Probable glutamine amidotransferase DUG3 (357 aa).

C2 (for GATase activity) is an active-site residue. The 259-residue stretch at 2–260 (CRFLIFKGKQ…PGEYRVERLD (259 aa)) folds into the Glutamine amidotransferase type-2 domain.

Belongs to the DUG3 family. In terms of assembly, component of the GSH degradosomal complex composed of at least DUG1, DUG2 and DUG3.

The protein resides in the cytoplasm. Functionally, component of the GSH degradosomal complex involved in the degradation of glutathione (GSH) and other peptides containing a gamma-glu-X bond. The sequence is that of Probable glutamine amidotransferase DUG3 (DUG3) from Saccharomyces cerevisiae (strain ATCC 204508 / S288c) (Baker's yeast).